Consider the following 176-residue polypeptide: Jacalin-related lectin 19 (176 aa).

The Jacalin-type lectin domain occupies 12–154; sequence TVFVGPWGGN…LDSIGFHLSR (143 aa).

This sequence belongs to the jacalin lectin family.

This chain is Jacalin-related lectin 19 (JAL19), found in Arabidopsis thaliana (Mouse-ear cress).